The primary structure comprises 191 residues: Chromobox protein homolog 5 (191 aa).

Phosphoserine is present on residues Ser-11, Ser-12, Ser-13, and Ser-14. Residues 20–78 (YVVEKVLDRRVVKGQVEYLLKWKGFSEEHNTWEPEKNLDCPELISEFMKKYKKMKEGEN) enclose the Chromo 1 domain. Lys-32 is covalently cross-linked (Glycyl lysine isopeptide (Lys-Gly) (interchain with G-Cter in SUMO2)). Residue Lys-40 is modified to N6-acetyllysine. The segment at 70-117 (YKKMKEGENNKPREKSESNKRKSNFSNSADDIKSKKKREQSNDIARGF) is disordered. The span at 73–89 (MKEGENNKPREKSESNK) shows a compositional bias: basic and acidic residues. A Glycyl lysine isopeptide (Lys-Gly) (interchain with G-Cter in SUMO2) cross-link involves residue Lys-91. Residues Ser-92, Ser-95, and Ser-97 each carry the phosphoserine modification. Glycyl lysine isopeptide (Lys-Gly) (interchain with G-Cter in SUMO2) cross-links involve residues Lys-102, Lys-106, Lys-154, and Lys-184. Residues 121–179 (LEPEKIIGATDSCGDLMFLMKWKDTDEADLVLAKEANVKCPQIVIAFYEERLTWHAYPE) enclose the Chromo 2; shadow subtype domain.

Homodimer. Interacts with histone H3 methylated at 'Lys-9'. Interacts (via Chromo 2; shadow subtype domain) with the MIS12 complex subunit NSL1; the interaction is direct, involves dimeric CBX5, and occurs during interphase. Interacts with POGZ; POGZ and PXVXL motif-containing proteins such as INCENP and TRIM28 compete for interaction with CBX5. Interacts with LRIF1 (via PxVxL motif). Interacts with INCENP. Interacts with TRIM24. Interacts (via the chromoshadow domain) with ATRX; the interaction is direct. Interacts (via the chromoshadow domain) with CHAF1A; the interaction is direct. Interacts (via the chromoshadow domain) with LBR; the interaction is direct. Interacts (via the chromoshadow domain) with NIPBL; the interaction is direct. Interacts (via the chromoshadow domain) with SP100; the interaction is direct. Interacts (via the chromoshadow domain) with STAM2; the interaction is direct. Interacts (via the chromoshadow domain) with TRIM28; the interaction is direct. Interacts (via the chromoshadow domain) with CBX3; the interaction is direct. Interacts with PRR14 (via N-terminus). Interacts with RRP1B. Interacts with HNRNPU (via C-terminus); this interaction is, at least in part, RNA-dependent. Interacts with ZNF263; recruited to the SIX3 promoter along with other proteins involved in chromatin modification and transcriptional corepression where it contributes to transcriptional repression. Interacts with AURKB during mitosis. Interacts with CHAMP1. Interacts with BAHD1. Interacts with HP1BP3. Interacts with CHD3. Interacts with CHD4. Interacts with SMYD5. Interacts with KMT5B. Interacts with KMT5C. In terms of assembly, (Microbial infection) Interacts with JC virus agnoprotein; this interaction induces the dissociation of CBX5 from LBR, resulting in destabilization of the nuclear envelope. In terms of processing, phosphorylation of HP1 and LBR may be responsible for some of the alterations in chromatin organization and nuclear structure which occur at various times during the cell cycle. Phosphorylated during interphase and possibly hyper-phosphorylated during mitosis. Ubiquitinated.

It is found in the nucleus. It localises to the chromosome. Its subcellular location is the centromere. Functionally, component of heterochromatin that recognizes and binds histone H3 tails methylated at 'Lys-9' (H3K9me), leading to epigenetic repression. In contrast, it is excluded from chromatin when 'Tyr-41' of histone H3 is phosphorylated (H3Y41ph). May contribute to the association of heterochromatin with the inner nuclear membrane by interactions with the lamin-B receptor (LBR). Involved in the formation of kinetochore through interaction with the MIS12 complex subunit NSL1. Required for the formation of the inner centromere. This is Chromobox protein homolog 5 (CBX5) from Homo sapiens (Human).